Here is a 325-residue protein sequence, read N- to C-terminus: Glycine--tRNA ligase alpha subunit (325 aa).

This sequence belongs to the class-II aminoacyl-tRNA synthetase family. In terms of assembly, tetramer of two alpha and two beta subunits.

It localises to the cytoplasm. The enzyme catalyses tRNA(Gly) + glycine + ATP = glycyl-tRNA(Gly) + AMP + diphosphate. This chain is Glycine--tRNA ligase alpha subunit, found in Ralstonia nicotianae (strain ATCC BAA-1114 / GMI1000) (Ralstonia solanacearum).